Reading from the N-terminus, the 381-residue chain is Curved DNA-binding protein (381 aa).

Position 8 is a phosphoserine (serine 8). Position 362 is a phosphothreonine (threonine 362). The Nuclear localization signal motif lies at 368 to 375 (KNKKKSKK).

This sequence belongs to the peptidase M24 family.

It is found in the nucleus. A non-essential protein that preferentially binds curved DNA. Binds non-curved DNA with a much lower affinity. This Schizosaccharomyces pombe (strain 972 / ATCC 24843) (Fission yeast) protein is Curved DNA-binding protein (cdb4).